Consider the following 371-residue polypeptide: Queuine tRNA-ribosyltransferase (371 aa).

The Proton acceptor role is filled by Asp90. Residues 90 to 94, Asp144, Gln189, and Gly215 each bind substrate; that span reads DSGGF. The tract at residues 246-252 is RNA binding; sequence GVGTPEN. The active-site Nucleophile is Asp265. The segment at 270–274 is RNA binding; important for wobble base 34 recognition; it reads TRNAR. Residues Cys303, Cys305, Cys308, and His334 each coordinate Zn(2+).

This sequence belongs to the queuine tRNA-ribosyltransferase family. Homodimer. Within each dimer, one monomer is responsible for RNA recognition and catalysis, while the other monomer binds to the replacement base PreQ1. It depends on Zn(2+) as a cofactor.

It carries out the reaction 7-aminomethyl-7-carbaguanine + guanosine(34) in tRNA = 7-aminomethyl-7-carbaguanosine(34) in tRNA + guanine. Its pathway is tRNA modification; tRNA-queuosine biosynthesis. Its function is as follows. Catalyzes the base-exchange of a guanine (G) residue with the queuine precursor 7-aminomethyl-7-deazaguanine (PreQ1) at position 34 (anticodon wobble position) in tRNAs with GU(N) anticodons (tRNA-Asp, -Asn, -His and -Tyr). Catalysis occurs through a double-displacement mechanism. The nucleophile active site attacks the C1' of nucleotide 34 to detach the guanine base from the RNA, forming a covalent enzyme-RNA intermediate. The proton acceptor active site deprotonates the incoming PreQ1, allowing a nucleophilic attack on the C1' of the ribose to form the product. After dissociation, two additional enzymatic reactions on the tRNA convert PreQ1 to queuine (Q), resulting in the hypermodified nucleoside queuosine (7-(((4,5-cis-dihydroxy-2-cyclopenten-1-yl)amino)methyl)-7-deazaguanosine). The chain is Queuine tRNA-ribosyltransferase from Helicobacter pylori (strain HPAG1).